Consider the following 275-residue polypeptide: tRNA pseudouridine synthase A (275 aa).

Aspartate 56 (nucleophile) is an active-site residue. Tyrosine 109 is a binding site for substrate.

The protein belongs to the tRNA pseudouridine synthase TruA family.

The catalysed reaction is uridine(38/39/40) in tRNA = pseudouridine(38/39/40) in tRNA. Its function is as follows. Formation of pseudouridine at positions 38, 39 and 40 in the anticodon stem and loop of transfer RNAs. This chain is tRNA pseudouridine synthase A, found in Methanothermobacter thermautotrophicus (strain ATCC 29096 / DSM 1053 / JCM 10044 / NBRC 100330 / Delta H) (Methanobacterium thermoautotrophicum).